The following is a 416-amino-acid chain: Alpha-1-antiproteinase (416 aa).

Residues 1–24 (MALSITRGLLLLAALCCLAPISLA) form the signal peptide. Residues N68, N105, N143, and N269 are each glycosylated (N-linked (GlcNAc...) asparagine). The tract at residues 371-390 (GSTFLEAIPMSLPPDVEFNR) is RCL. At S381 the chain carries Phosphoserine.

This sequence belongs to the serpin family. As to quaternary structure, interacts with CELA2A. Interacts with ERGIC3 and LMAN1/ERGIC53. Interacts with PRSS1/Trypsin. As to expression, plasma.

The protein resides in the secreted. Functionally, inhibitor of serine proteases. Its primary target is elastase, but it also has a moderate affinity for plasmin and thrombin. Inhibits trypsin, chymotrypsin and plasminogen activator. This chain is Alpha-1-antiproteinase (SERPINA1), found in Bos taurus (Bovine).